The following is a 1203-amino-acid chain: DNA-directed RNA polymerase subunit beta' (1203 aa).

4 residues coordinate Zn(2+): Cys-60, Cys-62, Cys-75, and Cys-78. Residues Asp-449, Asp-451, and Asp-453 each contribute to the Mg(2+) site. Zn(2+)-binding residues include Cys-818, Cys-892, Cys-899, and Cys-902. The tract at residues 1180-1203 is disordered; that stretch reads RNLESGLDMPESAEESSEEETQTV. Over residues 1190–1203 the composition is skewed to acidic residues; it reads ESAEESSEEETQTV.

This sequence belongs to the RNA polymerase beta' chain family. The RNAP catalytic core consists of 2 alpha, 1 beta, 1 beta' and 1 omega subunit. When a sigma factor is associated with the core the holoenzyme is formed, which can initiate transcription. Mg(2+) serves as cofactor. The cofactor is Zn(2+).

It catalyses the reaction RNA(n) + a ribonucleoside 5'-triphosphate = RNA(n+1) + diphosphate. DNA-dependent RNA polymerase catalyzes the transcription of DNA into RNA using the four ribonucleoside triphosphates as substrates. The sequence is that of DNA-directed RNA polymerase subunit beta' from Oceanobacillus iheyensis (strain DSM 14371 / CIP 107618 / JCM 11309 / KCTC 3954 / HTE831).